Reading from the N-terminus, the 167-residue chain is Dimethylamine corrinoid protein 3 (167 aa).

The B12-binding N-terminal domain occupies 1-44; sequence MNEVGVRFERGKLFLPHVMMAADAMTAGVNALKDLMPEGSASSK. A B12-binding domain is found at 45 to 167; sequence MGVIVNGTVE…AVTKAKELLA (123 aa). His-58 contributes to the methylcob(III)alamin binding site.

This sequence belongs to the methylamine corrinoid protein family.

Its pathway is one-carbon metabolism; methanogenesis from dimethylamine. Acts as a methyl group carrier between MtbB and MtbA. This Methanosarcina mazei (strain ATCC BAA-159 / DSM 3647 / Goe1 / Go1 / JCM 11833 / OCM 88) (Methanosarcina frisia) protein is Dimethylamine corrinoid protein 3 (mtbC3).